Reading from the N-terminus, the 296-residue chain is 4-hydroxybenzoate octaprenyltransferase (296 aa).

A run of 8 helical transmembrane segments spans residues 28 to 48, 51 to 71, 102 to 122, 143 to 163, 174 to 194, 212 to 232, 233 to 253, and 274 to 294; these read IGTLLLLWPTYWALWLASDGI, LAVLAAFTIGTFLMRSAGCVI, LLLTAFLCLLAALCLIPLNHL, FFPIPQFYLGLAFSFGIPMAF, AWILFAANVLWTLAYDTVYAM, FGRYDIAAVMLCHGGFTLLMA, VLGAVIGAAWAYWTAIPIVLL, and FLANNRIGWVWFAAIFAHTFF.

This sequence belongs to the UbiA prenyltransferase family. The cofactor is Mg(2+).

The protein resides in the cell inner membrane. It carries out the reaction all-trans-octaprenyl diphosphate + 4-hydroxybenzoate = 4-hydroxy-3-(all-trans-octaprenyl)benzoate + diphosphate. Its pathway is cofactor biosynthesis; ubiquinone biosynthesis. Its function is as follows. Catalyzes the prenylation of para-hydroxybenzoate (PHB) with an all-trans polyprenyl group. Mediates the second step in the final reaction sequence of ubiquinone-8 (UQ-8) biosynthesis, which is the condensation of the polyisoprenoid side chain with PHB, generating the first membrane-bound Q intermediate 3-octaprenyl-4-hydroxybenzoate. This Neisseria gonorrhoeae (strain NCCP11945) protein is 4-hydroxybenzoate octaprenyltransferase.